A 121-amino-acid polypeptide reads, in one-letter code: MADLNVEIVAVERELWSGPATFVFTRTTAGEIGILPRHIPLVAQLVDDAMVRVEREGEDDLRIAVDGGFLSVTEETVRILVENAQFESEIDADAAKEDAASDDERTAAWGRARLRALGQID.

This sequence belongs to the ATPase epsilon chain family. In terms of assembly, F-type ATPases have 2 components, CF(1) - the catalytic core - and CF(0) - the membrane proton channel. CF(1) has five subunits: alpha(3), beta(3), gamma(1), delta(1), epsilon(1). CF(0) has three main subunits: a, b and c.

It localises to the cell membrane. In terms of biological role, produces ATP from ADP in the presence of a proton gradient across the membrane. The sequence is that of ATP synthase epsilon chain from Mycolicibacterium smegmatis (strain ATCC 700084 / mc(2)155) (Mycobacterium smegmatis).